The primary structure comprises 120 residues: Chaperonin GroEL (120 aa).

ATP is bound at residue 23–27; it reads DGTTT.

Belongs to the chaperonin (HSP60) family. As to quaternary structure, forms a cylinder of 14 subunits composed of two heptameric rings stacked back-to-back. Interacts with the co-chaperonin GroES.

It is found in the cytoplasm. The enzyme catalyses ATP + H2O + a folded polypeptide = ADP + phosphate + an unfolded polypeptide.. Its function is as follows. Together with its co-chaperonin GroES, plays an essential role in assisting protein folding. The GroEL-GroES system forms a nano-cage that allows encapsulation of the non-native substrate proteins and provides a physical environment optimized to promote and accelerate protein folding. This is Chaperonin GroEL from Mycolicibacterium rhodesiae (Mycobacterium rhodesiae).